Consider the following 95-residue polypeptide: Class II hydrophobin 3 (95 aa).

The N-terminal stretch at 1 to 16 is a signal peptide; the sequence is MKLLAVAALLAGAAIA. 4 disulfides stabilise this stretch: cysteine 28/cysteine 77, cysteine 38/cysteine 68, cysteine 39/cysteine 51, and cysteine 78/cysteine 89.

Belongs to the cerato-ulmin hydrophobin family.

The protein localises to the secreted. Its subcellular location is the cell wall. Aerial growth, conidiation, and dispersal of filamentous fungi in the environment rely upon a capability of their secreting small amphipathic proteins called hydrophobins (HPBs) with low sequence identity. Class I can self-assemble into an outermost layer of rodlet bundles on aerial cell surfaces, conferring cellular hydrophobicity that supports fungal growth, development and dispersal; whereas Class II form highly ordered films at water-air interfaces through intermolecular interactions but contribute nothing to the rodlet structure. Hyd3 plays a neglectable role in hyphal growth and asexual development and does not seem involved in cellular hydrophobicity, conidial adhesion, stress tolerance nor insect pathogenicity. The chain is Class II hydrophobin 3 from Metarhizium robertsii (strain ARSEF 23 / ATCC MYA-3075) (Metarhizium anisopliae (strain ARSEF 23)).